Consider the following 403-residue polypeptide: Chaperone protein DnaJ (403 aa).

One can recognise a J domain in the interval 4 to 69 (DYYEILGVAR…DKRRRYDQFG (66 aa)). A CR-type zinc finger spans residues 159–240 (GVEKTIKIKK…CYGEGIKQGE (82 aa)). The Zn(2+) site is built by cysteine 172, cysteine 175, cysteine 188, cysteine 191, cysteine 214, cysteine 217, cysteine 228, and cysteine 231. CXXCXGXG motif repeat units follow at residues 172–179 (CRECNGTG), 188–195 (CPTCHGSG), 214–221 (CPTCGGEG), and 228–235 (CPSCYGEG).

This sequence belongs to the DnaJ family. In terms of assembly, homodimer. Zn(2+) is required as a cofactor.

Its subcellular location is the cytoplasm. In terms of biological role, participates actively in the response to hyperosmotic and heat shock by preventing the aggregation of stress-denatured proteins and by disaggregating proteins, also in an autonomous, DnaK-independent fashion. Unfolded proteins bind initially to DnaJ; upon interaction with the DnaJ-bound protein, DnaK hydrolyzes its bound ATP, resulting in the formation of a stable complex. GrpE releases ADP from DnaK; ATP binding to DnaK triggers the release of the substrate protein, thus completing the reaction cycle. Several rounds of ATP-dependent interactions between DnaJ, DnaK and GrpE are required for fully efficient folding. Also involved, together with DnaK and GrpE, in the DNA replication of plasmids through activation of initiation proteins. This Chlorobaculum tepidum (strain ATCC 49652 / DSM 12025 / NBRC 103806 / TLS) (Chlorobium tepidum) protein is Chaperone protein DnaJ.